The chain runs to 124 residues: Small ribosomal subunit protein uS12 (124 aa).

Residue Asp-89 is modified to 3-methylthioaspartic acid.

This sequence belongs to the universal ribosomal protein uS12 family. Part of the 30S ribosomal subunit. Contacts proteins S8 and S17. May interact with IF1 in the 30S initiation complex.

Its function is as follows. With S4 and S5 plays an important role in translational accuracy. Interacts with and stabilizes bases of the 16S rRNA that are involved in tRNA selection in the A site and with the mRNA backbone. Located at the interface of the 30S and 50S subunits, it traverses the body of the 30S subunit contacting proteins on the other side and probably holding the rRNA structure together. The combined cluster of proteins S8, S12 and S17 appears to hold together the shoulder and platform of the 30S subunit. The protein is Small ribosomal subunit protein uS12 of Shewanella amazonensis (strain ATCC BAA-1098 / SB2B).